The chain runs to 354 residues: Major egg antigen (354 aa).

The disordered stretch occupies residues 1 to 21 (MSGGKQHNAVSIPVNREQRSF). 2 consecutive sHSP domains span residues 122 to 233 (SVND…VAVR) and 251 to 354 (AKGV…AITH).

Belongs to the small heat shock protein (HSP20) family.

The polypeptide is Major egg antigen (Schistosoma mansoni (Blood fluke)).